The sequence spans 202 residues: Glycerol-3-phosphate acyltransferase (202 aa).

Transmembrane regions (helical) follow at residues 3–23, 51–71, 74–94, 116–136, and 140–160; these read ILLA…VVVS, KAAI…VWLV, FGIG…LGHL, AVHP…AFFF, and SLAA…LFGT.

It belongs to the PlsY family. In terms of assembly, probably interacts with PlsX.

It is found in the cell inner membrane. The catalysed reaction is an acyl phosphate + sn-glycerol 3-phosphate = a 1-acyl-sn-glycero-3-phosphate + phosphate. Its pathway is lipid metabolism; phospholipid metabolism. Functionally, catalyzes the transfer of an acyl group from acyl-phosphate (acyl-PO(4)) to glycerol-3-phosphate (G3P) to form lysophosphatidic acid (LPA). This enzyme utilizes acyl-phosphate as fatty acyl donor, but not acyl-CoA or acyl-ACP. In Burkholderia thailandensis (strain ATCC 700388 / DSM 13276 / CCUG 48851 / CIP 106301 / E264), this protein is Glycerol-3-phosphate acyltransferase.